A 474-amino-acid chain; its full sequence is Gamma-aminobutyric acid receptor subunit gamma-2 (474 aa).

The signal sequence occupies residues 1–38 (MSSPNTWSIGSSVYSPVFSQKMTLWILLLLSLYPGFTS). The Extracellular portion of the chain corresponds to 39–274 (QKSDDDYEDY…FDLSRRMGYF (236 aa)). Residues Asn51 and Asn128 are each glycosylated (N-linked (GlcNAc...) asparagine). The cysteines at positions 189 and 203 are disulfide-linked. The N-linked (GlcNAc...) asparagine glycan is linked to Asn246. A helical transmembrane segment spans residues 275 to 295 (TIQTYIPCTLIVVLSWVSFWI). Residues 296–301 (NKDAVP) lie on the Cytoplasmic side of the membrane. Residues 302–321 (ARTSLGITTVLTMTTLSTIA) traverse the membrane as a helical segment. Over 322 to 333 (RKSLPKVSYVTA) the chain is Extracellular. Residues 334 to 358 (MDLFVSVCFIFVFSALVEYGTLHYF) traverse the membrane as a helical segment. The Cytoplasmic segment spans residues 359-450 (VSNRKPSKDK…IHIRIAKMDS (92 aa)). Phosphoserine; by PKC is present on Ser381. Residues 451–472 (YARIFFPTAFCLFNLVYWVSYL) form a helical membrane-spanning segment. Residues 473–474 (YL) lie on the Extracellular side of the membrane.

This sequence belongs to the ligand-gated ion channel (TC 1.A.9) family. Gamma-aminobutyric acid receptor (TC 1.A.9.5) subfamily. GABRG2 sub-subfamily. Heteropentamer, formed by a combination of alpha (GABRA1-6), beta (GABRB1-3), gamma (GABRG1-3), delta (GABRD), epsilon (GABRE), rho (GABRR1-3), pi (GABRP) and theta (GABRQ) chains, each subunit exhibiting distinct physiological and pharmacological properties. Interacts with GABARAP. Interacts with KIF21B. Identified in a complex of 720 kDa composed of LHFPL4, NLGN2, GABRA1, GABRB2, GABRG2 and GABRB3. Interacts with LHFPL4. Interacts with SHISA7; interaction leads to the regulation of GABA(A) receptor trafficking, channel deactivation kinetics and pharmacology. In terms of processing, glycosylated. Palmitoylated by ZDHHC3/GODZ; required for the accumulation of GABA(A) receptors at the postsynaptic membrane of inhibitory GABAergic synapses. As to expression, expressed in brain neurons (at protein level).

It localises to the postsynaptic cell membrane. The protein localises to the cell membrane. Its subcellular location is the cell projection. The protein resides in the dendrite. It is found in the cytoplasmic vesicle membrane. The catalysed reaction is chloride(in) = chloride(out). With respect to regulation, allosterically activated by benzodiazepines. Activated by pentobarbital. Inhibited by the antagonist bicuculline. Inhibited by zinc ions. Potentiated by histamine. Its function is as follows. Gamma subunit of the heteropentameric ligand-gated chloride channel gated by gamma-aminobutyric acid (GABA), a major inhibitory neurotransmitter in the brain. GABA-gated chloride channels, also named GABA(A) receptors (GABAAR), consist of five subunits arranged around a central pore and contain GABA active binding site(s) located at the alpha and beta subunit interface(s). When activated by GABA, GABAARs selectively allow the flow of chloride anions across the cell membrane down their electrochemical gradient. Gamma-2/GABRG2-containing GABAARs are found at both synaptic and extrasynaptic sites. Chloride influx into the postsynaptic neuron following GABAAR opening decreases the neuron ability to generate a new action potential, thereby reducing nerve transmission. GABAARs containing alpha-1 and beta-2 or -3 subunits exhibit synaptogenic activity; the gamma-2 subunit being necessary but not sufficient to induce rapid synaptic contacts formation. Extrasynaptic gamma-2-containing receptors contribute to the tonic GABAergic inhibition. GABAARs function also as histamine receptor where histamine binds at the interface of two neighboring beta subunits and potentiates GABA response in a gamma-2 subunit-controlled manner. In Mus musculus (Mouse), this protein is Gamma-aminobutyric acid receptor subunit gamma-2.